Here is an 850-residue protein sequence, read N- to C-terminus: Protein translocase subunit SecA 2 (850 aa).

ATP contacts are provided by residues Q83, 101-105, and D491; that span reads GEGKT.

This sequence belongs to the SecA family. As to quaternary structure, monomer and homodimer. Part of the essential Sec protein translocation apparatus which comprises SecA, SecYEG and auxiliary proteins SecDF. Other proteins may also be involved.

It localises to the cell membrane. Its subcellular location is the cytoplasm. It carries out the reaction ATP + H2O + cellular proteinSide 1 = ADP + phosphate + cellular proteinSide 2.. In terms of biological role, part of the Sec protein translocase complex. Interacts with the SecYEG preprotein conducting channel. Has a central role in coupling the hydrolysis of ATP to the transfer of proteins into and across the cell membrane, serving as an ATP-driven molecular motor driving the stepwise translocation of polypeptide chains across the membrane. This is Protein translocase subunit SecA 2 from Mycolicibacterium vanbaalenii (strain DSM 7251 / JCM 13017 / BCRC 16820 / KCTC 9966 / NRRL B-24157 / PYR-1) (Mycobacterium vanbaalenii).